A 369-amino-acid chain; its full sequence is Protein V (369 aa).

Disordered regions lie at residues 1-23 (MDQDALISKEDSEVEREASGGRE) and 54-320 (INTL…GHRR). Basic and acidic residues-rich tracts occupy residues 7 to 20 (ISKEDSEVEREASG), 99 to 110 (AEAHARNVDKQN), 150 to 168 (GAEDENREMAANPDKRGED), and 175 to 193 (EEIRRSAPLPDEREGRADN). Phosphoserine; by host is present on residues Ser249, Ser257, and Ser260. Zn(2+) contacts are provided by His318, Cys337, Cys341, Cys353, Cys355, Cys358, Cys362, and Cys365.

This sequence belongs to the paramyxoviruses V protein family. In terms of assembly, interacts with host IFIH1/MDA5 and DHX58/LGP2. Interacts with host IRF3. Interacts with host RIGI regulatory protein (via CARDs domain) and host TRIM25 (via SPRY domain); these interactions prevent TRIM25-mediated ubiquitination of RIG-I and disrupts downstream RIG-I signaling.

It localises to the host cytoplasm. Its function is as follows. Plays an essential role in the inhibition of host immune response. Prevents the establishment of cellular antiviral state by blocking interferon-alpha/beta (IFN-alpha/beta) production and signaling pathway. Interacts with host IFIH1/MDA5 and DHX58/LGP2 to inhibit the transduction pathway involved in the activation of IFN-beta promoter, thus protecting the virus against cell antiviral state. Also interacts with and inhibits host IRF3. Blocks the type I interferon signaling pathway by disrupting the RIG-I signaling pathway. The sequence is that of Protein V (P/V/C) from Cavia cutleri (Guinea pig).